Here is a 141-residue protein sequence, read N- to C-terminus: Brain ribonuclease (141 aa).

The interval Lys1–Tyr25 is disordered. 2 residues coordinate substrate: Lys7 and Arg10. Residue His12 is the Proton acceptor of the active site. A compositionally biased stretch (low complexity) spans Ser15–Asn24. Cystine bridges form between Cys26–Cys84, Cys40–Cys95, Cys58–Cys110, and Cys65–Cys72. Lys41–Thr45 contacts substrate. Asn62 carries an N-linked (GlcNAc...) asparagine glycan. Lys66 and Arg85 together coordinate substrate. Residue His119 is the Proton donor of the active site. O-linked (GalNAc...) threonine glycosylation occurs at Thr129.

This sequence belongs to the pancreatic ribonuclease family.

The protein resides in the secreted. The protein is Brain ribonuclease (BRN) of Giraffa camelopardalis (Giraffe).